Reading from the N-terminus, the 456-residue chain is tRNA modification GTPase MnmE (456 aa).

(6S)-5-formyl-5,6,7,8-tetrahydrofolate-binding residues include Lys29, Glu87, and Arg126. One can recognise a TrmE-type G domain in the interval 222 to 380; sequence GYKLAIIGRP…LLSLLASWLD (159 aa). Asn232 is a binding site for K(+). GTP contacts are provided by residues 232–237, 251–257, and 276–279; these read NVGKSS, SDIPGTT, and DTAG. Ser236 contributes to the Mg(2+) binding site. K(+) is bound by residues Ser251, Ile253, and Thr256. Position 257 (Thr257) interacts with Mg(2+). Lys456 is a binding site for (6S)-5-formyl-5,6,7,8-tetrahydrofolate.

It belongs to the TRAFAC class TrmE-Era-EngA-EngB-Septin-like GTPase superfamily. TrmE GTPase family. Homodimer. Heterotetramer of two MnmE and two MnmG subunits. K(+) serves as cofactor.

It localises to the cytoplasm. In terms of biological role, exhibits a very high intrinsic GTPase hydrolysis rate. Involved in the addition of a carboxymethylaminomethyl (cmnm) group at the wobble position (U34) of certain tRNAs, forming tRNA-cmnm(5)s(2)U34. This chain is tRNA modification GTPase MnmE, found in Wolinella succinogenes (strain ATCC 29543 / DSM 1740 / CCUG 13145 / JCM 31913 / LMG 7466 / NCTC 11488 / FDC 602W) (Vibrio succinogenes).